The sequence spans 100 residues: Urease subunit gamma (100 aa).

The protein belongs to the urease gamma subunit family. As to quaternary structure, heterotrimer of UreA (gamma), UreB (beta) and UreC (alpha) subunits. Three heterotrimers associate to form the active enzyme.

It is found in the cytoplasm. The enzyme catalyses urea + 2 H2O + H(+) = hydrogencarbonate + 2 NH4(+). Its pathway is nitrogen metabolism; urea degradation; CO(2) and NH(3) from urea (urease route): step 1/1. The polypeptide is Urease subunit gamma (Cupriavidus pinatubonensis (strain JMP 134 / LMG 1197) (Cupriavidus necator (strain JMP 134))).